A 102-amino-acid chain; its full sequence is Small ribosomal subunit protein uS10 (102 aa).

Belongs to the universal ribosomal protein uS10 family. Part of the 30S ribosomal subunit.

Functionally, involved in the binding of tRNA to the ribosomes. This Methylobacterium nodulans (strain LMG 21967 / CNCM I-2342 / ORS 2060) protein is Small ribosomal subunit protein uS10.